The primary structure comprises 147 residues: UPF0178 protein Nther_1836 (147 aa).

It belongs to the UPF0178 family.

This Natranaerobius thermophilus (strain ATCC BAA-1301 / DSM 18059 / JW/NM-WN-LF) protein is UPF0178 protein Nther_1836.